The chain runs to 340 residues: Sulfotransferase ppzF (340 aa).

The protein operates within secondary metabolite biosynthesis. In terms of biological role, sulfotransferase; part of the gene cluster that mediates the biosynthesis of pyrrolopyrazines, secondary metabolites showing insecticidal activity. The role of ppzF within the pathway has still to be determined. The single multifunctional NRPS ppzA is sufficient to produce peramine via condensation of 1-pyrroline-5-carboxylate and arginine, N-methylation of the alpha-amino group of arginine and reduction of the thioester and the cyclization to form an iminium ion resulting in release from the peptide synthetase. Deprotonation of this intermediate and oxidation of the pyrroline ring would give rise to peramine. In Epichloe species that produce only peramine, the peramine synthetase gene is not localized in a gene cluster, in contrast to Metarhizium species that contain additional pyrrolopyrazine biosynthesis genes. The 2-oxoglutarate-Fe(II) type oxidoreductase ppzC hydroxylates peramine to yield the newly identified compound 8-hydroxyperamine whereas ppzD converts L-proline into trans-4-hydroxy-L-proline, a precursor of peramine biosynthesis. This is Sulfotransferase ppzF from Metarhizium rileyi (strain RCEF 4871) (Nomuraea rileyi).